The following is a 979-amino-acid chain: Pheromone-regulated membrane protein 10 (979 aa).

Disordered regions lie at residues 1 to 279 (MGKS…FFSK), 295 to 318 (LRNVNLHPEADPEKNSVQEAEVDG), 337 to 411 (YSSL…PQRV), 432 to 451 (FSTASSIGEEPAKPSKPLLD), and 491 to 528 (ATKHYPGRKNEEASGSNSELPSFKNTRPKKNKKHLPKF). Residues 15 to 26 (GGKDARSPETRS) show a composition bias toward basic and acidic residues. A compositionally biased stretch (low complexity) spans 29–38 (SRSSTDNRSS). Residues 54–68 (LDLEEGVDDDADFDW) show a composition bias toward acidic residues. Residues 77 to 86 (DAQSLDNPFN) are compositionally biased toward polar residues. Over residues 105-115 (AIERDAVDTIR) the composition is skewed to basic and acidic residues. Residues 122 to 135 (EEPDSASDGEDVGM) are compositionally biased toward acidic residues. 2 stretches are compositionally biased toward basic and acidic residues: residues 138-148 (EYQRKRERLVD) and 158-175 (SPRRESREGKNVRFHTET). A compositionally biased stretch (polar residues) spans 192–213 (EAGTGTNENGEASSSGMKSSIN). The segment covering 253-263 (GAEKGMKSMKD) has biased composition (basic and acidic residues). A compositionally biased stretch (low complexity) spans 360 to 372 (SPSTPSSSPGPES). The span at 379–395 (DDYDFDQVDSDGEDSDL) shows a compositional bias: acidic residues. Over residues 503 to 515 (ASGSNSELPSFKN) the composition is skewed to polar residues. The segment covering 516 to 528 (TRPKKNKKHLPKF) has biased composition (basic residues). 10 helical membrane passes run 658-678 (WVCVLLYGFCSAMVTPYAFGG), 680-700 (WVNLAVSFFIGTCVGALQFIV), 710-730 (VFEISASIVVSFVGRAFGSIG), 734-754 (ICFGAVTQGSLALILPGYIIL), 773-793 (FYAIIYSLFLSFGITLGAALF), 809-829 (PISPWYRFLFVPAFTIGISLI), 832-852 (AHWIQLPVMVTISCTGYVVTY), 864-884 (FTASLAAFVIGIMGNLYSRVW), 886-906 (GLAVSAMLPAIFVQVPSGVAS), and 946-966 (ITMIQVSIGITVGLFGSSLIV).

This sequence belongs to the ThrE exporter (TC 2.A.79) family.

It localises to the membrane. This is Pheromone-regulated membrane protein 10 from Zygosaccharomyces rouxii (strain ATCC 2623 / CBS 732 / NBRC 1130 / NCYC 568 / NRRL Y-229).